A 266-amino-acid polypeptide reads, in one-letter code: Orotidine 5'-phosphate decarboxylase (266 aa).

Substrate contacts are provided by residues Asp38, 60–62 (KTH), 92–101 (DRKFADIGNT), Tyr218, and Arg236. Lys94 (proton donor) is an active-site residue.

Belongs to the OMP decarboxylase family.

It carries out the reaction orotidine 5'-phosphate + H(+) = UMP + CO2. The protein operates within pyrimidine metabolism; UMP biosynthesis via de novo pathway; UMP from orotate: step 2/2. This is Orotidine 5'-phosphate decarboxylase (URA3) from Candida maltosa (Yeast).